The sequence spans 677 residues: DNA-directed RNA polymerase subunit beta' (677 aa).

C69, C71, C87, and C90 together coordinate Zn(2+). Residues D489, D491, and D493 each contribute to the Mg(2+) site.

This sequence belongs to the RNA polymerase beta' chain family. RpoC1 subfamily. In plastids the minimal PEP RNA polymerase catalytic core is composed of four subunits: alpha, beta, beta', and beta''. When a (nuclear-encoded) sigma factor is associated with the core the holoenzyme is formed, which can initiate transcription. It depends on Mg(2+) as a cofactor. Zn(2+) is required as a cofactor.

Its subcellular location is the plastid. The protein resides in the chloroplast. The catalysed reaction is RNA(n) + a ribonucleoside 5'-triphosphate = RNA(n+1) + diphosphate. Its function is as follows. DNA-dependent RNA polymerase catalyzes the transcription of DNA into RNA using the four ribonucleoside triphosphates as substrates. The chain is DNA-directed RNA polymerase subunit beta' from Spinacia oleracea (Spinach).